The following is a 283-amino-acid chain: Pantothenate synthetase (283 aa).

30–37 (MGNLHDGH) serves as a coordination point for ATP. Catalysis depends on His37, which acts as the Proton donor. Gln61 contributes to the (R)-pantoate binding site. Gln61 serves as a coordination point for beta-alanine. 149 to 152 (GEKD) is an ATP binding site. Gln155 is a (R)-pantoate binding site. An ATP-binding site is contributed by 186–189 (LSSR).

Belongs to the pantothenate synthetase family. As to quaternary structure, homodimer.

The protein localises to the cytoplasm. The catalysed reaction is (R)-pantoate + beta-alanine + ATP = (R)-pantothenate + AMP + diphosphate + H(+). It functions in the pathway cofactor biosynthesis; (R)-pantothenate biosynthesis; (R)-pantothenate from (R)-pantoate and beta-alanine: step 1/1. In terms of biological role, catalyzes the condensation of pantoate with beta-alanine in an ATP-dependent reaction via a pantoyl-adenylate intermediate. This chain is Pantothenate synthetase, found in Escherichia coli O127:H6 (strain E2348/69 / EPEC).